A 390-amino-acid polypeptide reads, in one-letter code: Levoglucosan dehydrogenase (390 aa).

NADH contacts are provided by F13, M14, E43, T81, N83, H86, E103, K104, A130, and N132. K104 contributes to the levoglucosan binding site. Residues Y133 and Q163 each coordinate levoglucosan. NADH is bound by residues W175 and R176. Residues R176, D189, and H193 each contribute to the levoglucosan site. Y335 lines the NADH pocket.

This sequence belongs to the Gfo/Idh/MocA family. Homotetramer.

It carries out the reaction levoglucosan + NAD(+) = 3-dehydrolevoglucosan + NADH + H(+). In terms of biological role, catalyzes the oxidation of levoglucosan (1,6-anhydro-beta-D-glucose, LG) to 3-dehydrolevoglucosan (3-keto-LG). Exhibits high substrate specificity toward levoglucosan and NAD(+) for the oxidative reaction. Exhibits weak activities (about 4% compared with that of LG) toward L-sorbose and 1,5-anhydro-D-glucitol, and activity toward D-xylose is also detectable (1.7%). Can also efficiently catalyzes the NADH-dependent reduction (reverse reaction) of 3-keto-LG. The protein is Levoglucosan dehydrogenase of Pseudarthrobacter phenanthrenivorans (strain DSM 18606 / JCM 16027 / LMG 23796 / Sphe3) (Arthrobacter phenanthrenivorans).